The sequence spans 189 residues: Probable nicotinate-nucleotide adenylyltransferase (189 aa).

It belongs to the NadD family.

It carries out the reaction nicotinate beta-D-ribonucleotide + ATP + H(+) = deamido-NAD(+) + diphosphate. Its pathway is cofactor biosynthesis; NAD(+) biosynthesis; deamido-NAD(+) from nicotinate D-ribonucleotide: step 1/1. In terms of biological role, catalyzes the reversible adenylation of nicotinate mononucleotide (NaMN) to nicotinic acid adenine dinucleotide (NaAD). This Bacillus cereus (strain G9842) protein is Probable nicotinate-nucleotide adenylyltransferase.